Here is a 345-residue protein sequence, read N- to C-terminus: GTPase Obg (345 aa).

In terms of domain architecture, Obg spans 1–158; sequence MFIDSVKITL…RLVRLELKLI (158 aa). In terms of domain architecture, OBG-type G spans 159–339; the sequence is ADVGLVGFPN…LKFMLLEEIK (181 aa). GTP-binding positions include 165–172, 190–194, 212–215, 280–283, and 320–322; these read GFPNVGKS, FTTLT, DIPG, SKSD, and SSL. Mg(2+) contacts are provided by serine 172 and threonine 192.

Belongs to the TRAFAC class OBG-HflX-like GTPase superfamily. OBG GTPase family. Monomer. Mg(2+) is required as a cofactor.

It is found in the cytoplasm. Functionally, an essential GTPase which binds GTP, GDP and possibly (p)ppGpp with moderate affinity, with high nucleotide exchange rates and a fairly low GTP hydrolysis rate. Plays a role in control of the cell cycle, stress response, ribosome biogenesis and in those bacteria that undergo differentiation, in morphogenesis control. The polypeptide is GTPase Obg (Campylobacter jejuni subsp. doylei (strain ATCC BAA-1458 / RM4099 / 269.97)).